The chain runs to 250 residues: AA9 family lytic polysaccharide monooxygenase F (250 aa).

A signal peptide spans 1–21 (MAMSKIATLAGLLASAGLVAG). A Cu(2+)-binding site is contributed by histidine 22. Aspartate 51 contacts O2. Disulfide bonds link cysteine 77–cysteine 200 and cysteine 121–cysteine 125. Position 107 (histidine 107) interacts with Cu(2+). The O2 site is built by histidine 186 and glutamine 195. Cu(2+) is bound at residue tyrosine 197.

The protein belongs to the glycosyl hydrolase 61 family. Cu(2+) serves as cofactor.

The protein localises to the secreted. The catalysed reaction is Endohydrolysis of (1-&gt;4)-beta-D-glucosidic linkages in cellulose, lichenin and cereal beta-D-glucans.. Lytic polysaccharide monooxygenase (LMPO) that depolymerizes crystalline and amorphous polysaccharides via the oxidation of scissile alpha- or beta-(1-4)-glycosidic bonds, yielding C1 or C4 oxidation products. Catalysis by LPMOs requires the reduction of the active-site copper from Cu(II) to Cu(I) by a reducing agent and H(2)O(2) or O(2) as a cosubstrate. Major secreted component of the extracellular cellulolytic system. The polypeptide is AA9 family lytic polysaccharide monooxygenase F (Emericella nidulans (strain FGSC A4 / ATCC 38163 / CBS 112.46 / NRRL 194 / M139) (Aspergillus nidulans)).